A 437-amino-acid polypeptide reads, in one-letter code: Trigger factor (437 aa).

One can recognise a PPIase FKBP-type domain in the interval 164 to 249 (GDRVTIDFAG…LKSVEAPKLP (86 aa)).

It belongs to the FKBP-type PPIase family. Tig subfamily.

It is found in the cytoplasm. It carries out the reaction [protein]-peptidylproline (omega=180) = [protein]-peptidylproline (omega=0). Functionally, involved in protein export. Acts as a chaperone by maintaining the newly synthesized protein in an open conformation. Functions as a peptidyl-prolyl cis-trans isomerase. This chain is Trigger factor, found in Azoarcus sp. (strain BH72).